A 181-amino-acid polypeptide reads, in one-letter code: MILVVGLGNIGVEYENTRHNVGFMLIDLLLKESNFTNLTNSKFKGELFKIGSSLLLLKPSTYMNNSGLSVKAVNDFYKCERMIVIHDDIDINLGALRFKKGGSSGGHNGLKSIDALCGNDYERVRIGVGKGENVISHVLDKFKPEEEITLSKVLEHTKKALLELIEKDDLSAISSKYSLKA.

Tyrosine 14 contributes to the tRNA binding site. Residue histidine 19 is the Proton acceptor of the active site. TRNA contacts are provided by tyrosine 62, asparagine 64, and asparagine 108.

It belongs to the PTH family. In terms of assembly, monomer.

The protein resides in the cytoplasm. It catalyses the reaction an N-acyl-L-alpha-aminoacyl-tRNA + H2O = an N-acyl-L-amino acid + a tRNA + H(+). Functionally, hydrolyzes ribosome-free peptidyl-tRNAs (with 1 or more amino acids incorporated), which drop off the ribosome during protein synthesis, or as a result of ribosome stalling. Catalyzes the release of premature peptidyl moieties from peptidyl-tRNA molecules trapped in stalled 50S ribosomal subunits, and thus maintains levels of free tRNAs and 50S ribosomes. This chain is Peptidyl-tRNA hydrolase, found in Campylobacter jejuni subsp. doylei (strain ATCC BAA-1458 / RM4099 / 269.97).